The following is a 75-amino-acid chain: Peptide Ctri10033 (75 aa).

Positions 1 to 22 (MNSKYLFVFLILIVTFTDLCQG) are cleaved as a signal peptide. Residue arginine 43 is modified to Arginine amide. Residues 47 to 75 (ELGSQYDYLQDFRKRELDLDDLLSKFPDY) constitute a propeptide that is removed on maturation.

Belongs to the non-disulfide-bridged peptide (NDBP) superfamily. Short antimicrobial peptide (group 4) family. Expressed by the venom gland.

It is found in the secreted. The polypeptide is Peptide Ctri10033 (Chaerilus tricostatus (Scorpion)).